Consider the following 183-residue polypeptide: Alkyl hydroperoxide reductase AhpD (183 aa).

C132 functions as the Proton donor in the catalytic mechanism. C132 and C135 are joined by a disulfide. Residue C135 is the Cysteine sulfenic acid (-SOH) intermediate of the active site.

This sequence belongs to the AhpD family.

It catalyses the reaction N(6)-[(R)-dihydrolipoyl]-L-lysyl-[lipoyl-carrier protein] + a hydroperoxide = N(6)-[(R)-lipoyl]-L-lysyl-[lipoyl-carrier protein] + an alcohol + H2O. In terms of biological role, antioxidant protein with alkyl hydroperoxidase activity. Required for the reduction of the AhpC active site cysteine residues and for the regeneration of the AhpC enzyme activity. The protein is Alkyl hydroperoxide reductase AhpD of Acidobacterium capsulatum (strain ATCC 51196 / DSM 11244 / BCRC 80197 / JCM 7670 / NBRC 15755 / NCIMB 13165 / 161).